A 164-amino-acid polypeptide reads, in one-letter code: MRIGLYPGTFDPITLGHQDIIQRALELVDRLVIGVAINRDKSPLFALEDRVAMVREECDRIVAKRGGEIVVHPFENLLIDCARDVGATVIVRGLRAVADFEYEFQMVGMNRAMDDSIETVFLMADARRQAIASKLVKEIARLGGDVSKFVSPTVRDALVGRFAR.

Residue Thr9 participates in substrate binding. ATP-binding positions include 9-10 (TF) and His17. Substrate contacts are provided by Lys41, Leu78, and Arg92. ATP contacts are provided by residues 93–95 (GLR), Glu103, and 128–134 (RQAIASK).

This sequence belongs to the bacterial CoaD family. As to quaternary structure, homohexamer. Requires Mg(2+) as cofactor.

The protein resides in the cytoplasm. It carries out the reaction (R)-4'-phosphopantetheine + ATP + H(+) = 3'-dephospho-CoA + diphosphate. The protein operates within cofactor biosynthesis; coenzyme A biosynthesis; CoA from (R)-pantothenate: step 4/5. Its function is as follows. Reversibly transfers an adenylyl group from ATP to 4'-phosphopantetheine, yielding dephospho-CoA (dPCoA) and pyrophosphate. The chain is Phosphopantetheine adenylyltransferase from Paracoccus denitrificans (strain Pd 1222).